A 723-amino-acid chain; its full sequence is Hypoxia-inducible factor prolyl hydroxylase (723 aa).

C39, C42, C54, C57, C63, H67, H75, and C79 together coordinate Zn(2+). The MYND-type; atypical zinc-finger motif lies at 39–79 (CTYCGSSCTSSQLQTCLFCGTVAYCSKEHQQLDWLTHKMIC). Positions 249-270 (PSTASTATIPPPATTTSSATSS) are enriched in low complexity. 2 disordered regions span residues 249-275 (PSTASTATIPPPATTTSSATSSGKSET) and 294-323 (IETEGGSKPTVSRTRKRPTPSNSADPKINY). One can recognise a Fe2OG dioxygenase domain in the interval 468 to 566 (GRSRAMLAIY…RFAITIWYMD (99 aa)). H487, D489, and H548 together coordinate Fe cation. 2-oxoglutarate is bound at residue R557. The disordered stretch occupies residues 678–723 (RTTSLQSISDHFRSERSHERRSSTSSDQDLDEGLPPPPSTNPEYYI). The segment covering 687-699 (DHFRSERSHERRS) has biased composition (basic and acidic residues).

In terms of assembly, interacts (via catalytic domain) with lin-10 (via N-terminus); the interaction regulates lin-10 subcellular localization; the interaction is direct. Interacts (via catalytic domain) with swan-1 (via WD 1-3 repeats); the interaction may regulate vhl-1-independent hif-1 transcriptional activity; the interaction is direct. Interacts (via C-terminus) with cysl-1; the interaction is enhanced by hydrogen disulfide and activates hif-1-mediated transcription; the interaction is direct. Fe(2+) is required as a cofactor. It depends on L-ascorbate as a cofactor. As to expression, in larvae and adults, expressed in pharyngeal and body wall muscles.

Its subcellular location is the cytoplasm. It localises to the nucleus. The protein localises to the cell projection. The protein resides in the dendrite. It is found in the axon. The catalysed reaction is L-prolyl-[hypoxia-inducible factor alpha subunit] + 2-oxoglutarate + O2 = trans-4-hydroxy-L-prolyl-[hypoxia-inducible factor alpha subunit] + succinate + CO2. Inhibited by Co(2+) and dimethyloxalylglycine. Inhibited by the iron chelator 2, 2'-dipyridyl. Cellular oxygen sensor which regulates the stability and the activity of hypoxia-inducible transcription factor, hif-1. In normoxic conditions, hydroxylates hif-1 targeting it for vhl-1-mediated proteasomal degradation. In addition, regulates hif-1 transcriptional activity in a vhl-1-independent manner and independently of its hydroxylase activity. By regulating hif-1 activity, controls several cellular responses. Mediates susceptibility to B.thuringiensis and V.cholerae pore-forming toxins and enteropathogenic E.coli. Mediates susceptibility to P.aeruginosa PAO1-mediated killing by regulating resistance to cyanide produced by P.aeruginosa. Mediates resistance to S.aureus-mediated killing. In addition, plays a role in heat acclimation, neuronal development, behavioral responses to reoxygenation and hydrogen sulfide, iron homeostasis and aging. In neurons, involved in mitochondrion fusion during reoxygenation. Involved in egg laying. Functionally, regulates the trafficking of the glutamate receptor glr-1, probably independently of hif-1, by regulating lin-10 subcellular localization in response to oxygen levels. May hydroxylate lin-10. In Caenorhabditis elegans, this protein is Hypoxia-inducible factor prolyl hydroxylase.